The sequence spans 198 residues: Recombination protein RecR (198 aa).

The segment at 57–72 (CSVCGHITDRDPCYIC) adopts a C4-type zinc-finger fold. The region spanning 80 to 175 (SVVCVVQEPK…KVTRIAHGLP (96 aa)) is the Toprim domain.

The protein belongs to the RecR family.

Functionally, may play a role in DNA repair. It seems to be involved in an RecBC-independent recombinational process of DNA repair. It may act with RecF and RecO. The protein is Recombination protein RecR of Bacillus mycoides (strain KBAB4) (Bacillus weihenstephanensis).